The chain runs to 366 residues: Chorismate synthase (366 aa).

Positions 48 and 54 each coordinate NADP(+). FMN contacts are provided by residues 125 to 127 (RSS), 238 to 239 (NA), Gly-278, 293 to 297 (KPTSS), and Arg-319.

It belongs to the chorismate synthase family. As to quaternary structure, homotetramer. FMNH2 serves as cofactor.

The enzyme catalyses 5-O-(1-carboxyvinyl)-3-phosphoshikimate = chorismate + phosphate. It functions in the pathway metabolic intermediate biosynthesis; chorismate biosynthesis; chorismate from D-erythrose 4-phosphate and phosphoenolpyruvate: step 7/7. Catalyzes the anti-1,4-elimination of the C-3 phosphate and the C-6 proR hydrogen from 5-enolpyruvylshikimate-3-phosphate (EPSP) to yield chorismate, which is the branch point compound that serves as the starting substrate for the three terminal pathways of aromatic amino acid biosynthesis. This reaction introduces a second double bond into the aromatic ring system. The sequence is that of Chorismate synthase from Burkholderia vietnamiensis (strain G4 / LMG 22486) (Burkholderia cepacia (strain R1808)).